The sequence spans 454 residues: Protein phosphatase 1F (454 aa).

The span at 1–12 shows a compositional bias: polar residues; it reads MSSGAPQKSSPM. The interval 1-28 is disordered; the sequence is MSSGAPQKSSPMASGAEETPGFLDTLLQ. The PPM-type phosphatase domain maps to 156 to 413; sequence LVSIHAIRNT…DNITVMVVFL (258 aa). Mn(2+) contacts are provided by Asp198, Gly199, Asp360, and Asp404. The tract at residues 419 to 454 is disordered; it reads LLEGGNQGEGDPQAEGRRQDLPSSLPEPETQAPPRS. Ser454 is modified (phosphoserine).

It belongs to the PP2C family. As to quaternary structure, associates with FEM1B. The cofactor is Mg(2+). It depends on Mn(2+) as a cofactor.

The enzyme catalyses O-phospho-L-seryl-[protein] + H2O = L-seryl-[protein] + phosphate. The catalysed reaction is O-phospho-L-threonyl-[protein] + H2O = L-threonyl-[protein] + phosphate. In terms of biological role, dephosphorylates and concomitantly deactivates CaM-kinase II activated upon autophosphorylation, and CaM-kinases IV and I activated upon phosphorylation by CaM-kinase kinase. Promotes apoptosis. This is Protein phosphatase 1F (PPM1F) from Homo sapiens (Human).